Consider the following 79-residue polypeptide: Large ribosomal subunit protein bL31 (79 aa).

The protein belongs to the bacterial ribosomal protein bL31 family. Type A subfamily. In terms of assembly, part of the 50S ribosomal subunit.

In terms of biological role, binds the 23S rRNA. This chain is Large ribosomal subunit protein bL31 (rpmE), found in Rickettsia bellii (strain RML369-C).